We begin with the raw amino-acid sequence, 296 residues long: tRNA-cytidine(32) 2-sulfurtransferase (296 aa).

The PP-loop motif signature appears at 72-77; it reads SGGKDS. [4Fe-4S] cluster is bound by residues C147, C150, and C238.

This sequence belongs to the TtcA family. In terms of assembly, homodimer. Requires Mg(2+) as cofactor. It depends on [4Fe-4S] cluster as a cofactor.

The protein localises to the cytoplasm. It carries out the reaction cytidine(32) in tRNA + S-sulfanyl-L-cysteinyl-[cysteine desulfurase] + AH2 + ATP = 2-thiocytidine(32) in tRNA + L-cysteinyl-[cysteine desulfurase] + A + AMP + diphosphate + H(+). It functions in the pathway tRNA modification. Its function is as follows. Catalyzes the ATP-dependent 2-thiolation of cytidine in position 32 of tRNA, to form 2-thiocytidine (s(2)C32). The sulfur atoms are provided by the cysteine/cysteine desulfurase (IscS) system. The sequence is that of tRNA-cytidine(32) 2-sulfurtransferase from Sinorhizobium fredii (strain NBRC 101917 / NGR234).